Reading from the N-terminus, the 107-residue chain is Nucleoid-associated protein A1E_05550 (107 aa).

The protein belongs to the YbaB/EbfC family. In terms of assembly, homodimer.

It is found in the cytoplasm. The protein resides in the nucleoid. Functionally, binds to DNA and alters its conformation. May be involved in regulation of gene expression, nucleoid organization and DNA protection. In Rickettsia canadensis (strain McKiel), this protein is Nucleoid-associated protein A1E_05550.